We begin with the raw amino-acid sequence, 419 residues long: Multifunctional CCA protein (419 aa).

ATP contacts are provided by glycine 8 and arginine 11. 2 residues coordinate CTP: glycine 8 and arginine 11. The Mg(2+) site is built by aspartate 21 and aspartate 23. 3 residues coordinate ATP: arginine 91, arginine 141, and arginine 144. 3 residues coordinate CTP: arginine 91, arginine 141, and arginine 144. An HD domain is found at 230 to 331; sequence TGVHVMMVLD…VRLLERCDAL (102 aa).

It belongs to the tRNA nucleotidyltransferase/poly(A) polymerase family. Bacterial CCA-adding enzyme type 1 subfamily. As to quaternary structure, monomer. Can also form homodimers and oligomers. Requires Mg(2+) as cofactor. The cofactor is Ni(2+).

It carries out the reaction a tRNA precursor + 2 CTP + ATP = a tRNA with a 3' CCA end + 3 diphosphate. It catalyses the reaction a tRNA with a 3' CCA end + 2 CTP + ATP = a tRNA with a 3' CCACCA end + 3 diphosphate. Catalyzes the addition and repair of the essential 3'-terminal CCA sequence in tRNAs without using a nucleic acid template. Adds these three nucleotides in the order of C, C, and A to the tRNA nucleotide-73, using CTP and ATP as substrates and producing inorganic pyrophosphate. tRNA 3'-terminal CCA addition is required both for tRNA processing and repair. Also involved in tRNA surveillance by mediating tandem CCA addition to generate a CCACCA at the 3' terminus of unstable tRNAs. While stable tRNAs receive only 3'-terminal CCA, unstable tRNAs are marked with CCACCA and rapidly degraded. In Paracidovorax citrulli (strain AAC00-1) (Acidovorax citrulli), this protein is Multifunctional CCA protein.